A 409-amino-acid chain; its full sequence is Arginine biosynthesis bifunctional protein ArgJ (409 aa).

Positions 157, 183, 194, 281, 404, and 409 each coordinate substrate. Residue threonine 194 is the Nucleophile of the active site.

The protein belongs to the ArgJ family. In terms of assembly, heterotetramer of two alpha and two beta chains.

The protein localises to the cytoplasm. The catalysed reaction is N(2)-acetyl-L-ornithine + L-glutamate = N-acetyl-L-glutamate + L-ornithine. The enzyme catalyses L-glutamate + acetyl-CoA = N-acetyl-L-glutamate + CoA + H(+). It functions in the pathway amino-acid biosynthesis; L-arginine biosynthesis; L-ornithine and N-acetyl-L-glutamate from L-glutamate and N(2)-acetyl-L-ornithine (cyclic): step 1/1. It participates in amino-acid biosynthesis; L-arginine biosynthesis; N(2)-acetyl-L-ornithine from L-glutamate: step 1/4. Catalyzes two activities which are involved in the cyclic version of arginine biosynthesis: the synthesis of N-acetylglutamate from glutamate and acetyl-CoA as the acetyl donor, and of ornithine by transacetylation between N(2)-acetylornithine and glutamate. In Zymomonas mobilis subsp. mobilis (strain ATCC 31821 / ZM4 / CP4), this protein is Arginine biosynthesis bifunctional protein ArgJ.